The sequence spans 977 residues: Receptor-like protein kinase 7 (977 aa).

A signal peptide spans 1 to 28 (MAPSLRNFNFFHRFSTFLVFSLFSVVSS). The Extracellular segment spans residues 29–608 (DDLQVLLKLK…NPSRSHGDTR (580 aa)). 3 LRR repeats span residues 71–95 (RGNV…SVCE), 96–119 (IQSL…DLKN), and 121–145 (TSLK…SLNQ). N-linked (GlcNAc...) asparagine glycans are attached at residues Asn-73 and Asn-119. 2 N-linked (GlcNAc...) asparagine glycosylation sites follow: Asn-152 and Asn-167. 17 LRR repeats span residues 168 to 194 (ATSL…VVSL), 195 to 218 (KKLS…IGDL), 219 to 242 (TELR…ISKL), 244 to 265 (NLWQ…GFGN), 267 to 289 (KNLT…LRSL), 290 to 312 (TNLV…EFGE), 313 to 337 (FKDL…LGSL), 339 to 361 (DFDF…MCKN), 362 to 385 (GKMK…YANC), 386 to 409 (LTLQ…LWGL), 411 to 433 (KLEI…IKNG), 434 to 457 (KMLG…IGDT), 458 to 481 (ESLT…IGKL), 482 to 505 (KGLS…IGSC), 507 to 529 (MLSD…LGSL), 530 to 553 (PTLN…LSSL), and 555 to 578 (LSLL…SYNG). An N-linked (GlcNAc...) asparagine glycan is attached at Asn-204. Residues Asn-252 and Asn-268 are each glycosylated (N-linked (GlcNAc...) asparagine). Asn-318 is a glycosylation site (N-linked (GlcNAc...) asparagine). 2 N-linked (GlcNAc...) asparagine glycosylation sites follow: Asn-373 and Asn-399. N-linked (GlcNAc...) asparagine glycans are attached at residues Asn-536 and Asn-577. Residues 609–629 (VFVLCIVFGLLILLASLVFFL) form a helical membrane-spanning segment. Residues 630–977 (YLKKTEKKEG…ESDVKVKEIS (348 aa)) are Cytoplasmic-facing. A Protein kinase domain is found at 666-959 (IKEENLIGRG…QMIEDAEPCR (294 aa)). Residues 672–680 (IGRGGCGDV) and Lys-694 each bind ATP. Residue Asp-805 is the Proton acceptor of the active site.

It belongs to the protein kinase superfamily. Ser/Thr protein kinase family. As to quaternary structure, interacts with PIP1. Expressed in roots, stems and dry seeds. Expressed at junctions between organs, such as the insertion zones of stamens, petals and sepals, the transition zones of floral stem and pedicel, pedicel and silique, and floral stem and cauline leaves.

The protein localises to the membrane. It carries out the reaction L-seryl-[protein] + ATP = O-phospho-L-seryl-[protein] + ADP + H(+). The catalysed reaction is L-threonyl-[protein] + ATP = O-phospho-L-threonyl-[protein] + ADP + H(+). Functionally, plays a role in pattern-triggered immunity (PTI) signaling induced by pathogen-associated molecular patterns (PAMPs). Acts as a receptor for PIP1 defense peptide. PIP1 is an endogenous secreted peptide that acts as elicitor of immune response and positive regulator of defense response. Involved in the control of seed germination speed, in tolerance to oxidative stress and in maintaining seed longevity. This chain is Receptor-like protein kinase 7, found in Arabidopsis thaliana (Mouse-ear cress).